Consider the following 246-residue polypeptide: Cell division protein ZapD (246 aa).

The protein belongs to the ZapD family. Interacts with FtsZ.

It localises to the cytoplasm. Functionally, cell division factor that enhances FtsZ-ring assembly. Directly interacts with FtsZ and promotes bundling of FtsZ protofilaments, with a reduction in FtsZ GTPase activity. The chain is Cell division protein ZapD from Vibrio vulnificus (strain CMCP6).